A 74-amino-acid polypeptide reads, in one-letter code: Antimicrobial peptide ToAp1 (74 aa).

Residues 1–22 (MQMKYLIPIFFLVLIVADHCHA) form the signal peptide. Lys39 is modified (lysine amide). A propeptide spanning residues 40-74 (GRRKRDITAQIEQYRNIQKREAAELEELLANLPVY) is cleaved from the precursor.

This sequence belongs to the non-disulfide-bridged peptide (NDBP) superfamily. Short antimicrobial peptide (group 4) family. In terms of tissue distribution, expressed by the venom gland.

The protein resides in the secreted. Functionally, antimicrobial peptide. Is able to kill Mycobacterium abscessus subsp. massiliense in a dose-dependent manner. Has antifungal activity against Candida spp. and one Cryptococcus neoformans strains with MICs values ranging from 12.5 to 200 uM. Also shows an inhibitory activity on C.albicans biofilms at high concentrations. Shows low cytotoxic activity and has weak hemolytic activity on human erythrocytes. Shows anti-inflammatory activities, since it decreases release of pro-inflammatory cytokines, and increases release of anti-inflammatory cytokines. Acts by blocking the Toll-like receptor 4 (TLR4). In addition, decreases the expression of costimulatory molecules such as CD80 and CD86 in LPS-stimulated cells. In vivo, does not induce immune cell migration. Helical wheel projections predict an amphipathic peptide with distinct hydrophobic and hydrophilic faces. This chain is Antimicrobial peptide ToAp1, found in Tityus obscurus (Amazonian scorpion).